We begin with the raw amino-acid sequence, 509 residues long: Tyrosine-protein kinase Lck (509 aa).

G2 carries the N-myristoyl glycine lipid modification. The interval 2–72 (GCGCSSHPED…DNLVIALHSY (71 aa)) is interactions with CD4 and CD8. Residues C3 and C5 are each lipidated (S-palmitoyl cysteine). The 61-residue stretch at 61 to 121 (LQDNLVIALH…PFNFVAKANS (61 aa)) folds into the SH3 domain. K99 participates in a covalent cross-link: Glycyl lysine isopeptide (Lys-Gly) (interchain with G-Cter in ubiquitin). S102 bears the Phosphoserine mark. The SH2 domain maps to 127–224 (WFFKNLSRKD…GLCTRLSRPC (98 aa)). Residues 154-242 (RESESTAGSF…WWEDEWEVPR (89 aa)) are interaction with PTPRH. A Phosphothreonine modification is found at T159. At S162 the chain carries Phosphoserine. Y192 bears the Phosphotyrosine mark. S194 bears the Phosphoserine mark. A Protein kinase domain is found at 245–498 (LKLVERLGAG…YLRSVLEDFF (254 aa)). Residues 251–259 (LGAGQFGEV) and K273 contribute to the ATP site. Residue K276 forms a Glycyl lysine isopeptide (Lys-Gly) (interchain with G-Cter in ubiquitin) linkage. Residue D364 is the Proton acceptor of the active site. At Y394 the chain carries Phosphotyrosine; by autocatalysis. A Phosphotyrosine; by CSK modification is found at Y505.

The protein belongs to the protein kinase superfamily. Tyr protein kinase family. SRC subfamily. As to quaternary structure, binds to the cytoplasmic domain of cell surface receptors, such as AXL, CD2, CD4, CD5, CD8, CD44, CD45 and CD122. Also binds to effector molecules, such as PI4K, VAV1, RASA1, FYB1 and to other protein kinases including CDK1, RAF1, ZAP70 and SYK. Binds to phosphatidylinositol 3'-kinase (PI3K) from T-lymphocytes through its SH3 domain and to the tyrosine phosphorylated form of KHDRBS1/p70 through its SH2 domain. This interaction inhibits its tyrosine-kinase activity. Interacts with SQSTM1. Interacts with phosphorylated LIME1. Interacts with CBLB and PTPRH. Interacts with RUNX3. Forms a signaling complex with EPHA1, PTK2B and PI3-KINASE; upon activation by EFNA1 which may regulate T-lymphocyte migration. Associates with ZAP70 and RHOH; these interactions allow LCK-mediated RHOH and CD3 subunit phosphorylation in the presence of functional ZAP70. Interacts with UNC119; this interaction plays a crucial role in activation of LCK. Interacts with CEACAM1 (via cytoplasmic domain); mediates CEACAM1 phosphorylation resulting in PTPN6 recruitment that dephosphorylates TCR stimulation-induced CD247 and ZAP70. Interacts with CD160. Interacts with CD48. In terms of assembly, (Microbial infection) Interacts with herpes simplex virus 1 UL46; this interaction activates LCK. (Microbial infection) Interacts with HIV-1 Nef through its SH3 domain. In terms of processing, autophosphorylated on Tyr-394, increasing enzymatic activity, this site is dephosphorylated by PTN22. Phosphorylated on Tyr-505 by CSK, decreasing activity. Dephosphorylated by PTPRC/CD45. Dephosphorylation at Tyr-394 by PTPN2 negatively regulates T-cell receptor signaling. Dephosphorylation at Tyr-394 by DUSP22 negatively regulates T-cell receptor signaling. Post-translationally, myristoylation is required prior to palmitoylation. Palmitoylation regulates association with the plasma membrane and could be mediated by ZDHHC2. In terms of processing, 'Lys-63'-linked ubiquitinated at Lys-99 and Lys-276 by UBR2; this modification is required for autophosphorylation at Tyr-394. As to expression, expressed specifically in lymphoid cells.

It is found in the cell membrane. The protein resides in the cytoplasm. Its subcellular location is the cytosol. It carries out the reaction L-tyrosyl-[protein] + ATP = O-phospho-L-tyrosyl-[protein] + ADP + H(+). With respect to regulation, the relative activities of the inhibitory tyrosine-protein kinase CSK and the activating tyrosine-protein phosphatase PTPRC/CD45 determine the level of LCK activity. These interactions allow rapid and efficient activation of LCK in response to TCR stimulation. Non-receptor tyrosine-protein kinase that plays an essential role in the selection and maturation of developing T-cells in the thymus and in the function of mature T-cells. Plays a key role in T-cell antigen receptor (TCR)-linked signal transduction pathways. Constitutively associated with the cytoplasmic portions of the CD4 and CD8 surface receptors. Association of the TCR with a peptide antigen-bound MHC complex facilitates the interaction of CD4 and CD8 with MHC class II and class I molecules, respectively, thereby recruiting the associated LCK protein to the vicinity of the TCR/CD3 complex. LCK then phosphorylates tyrosine residues within the immunoreceptor tyrosine-based activation motifs (ITAM) of the cytoplasmic tails of the TCR-gamma chains and CD3 subunits, initiating the TCR/CD3 signaling pathway. Once stimulated, the TCR recruits the tyrosine kinase ZAP70, that becomes phosphorylated and activated by LCK. Following this, a large number of signaling molecules are recruited, ultimately leading to lymphokine production. LCK also contributes to signaling by other receptor molecules. Associates directly with the cytoplasmic tail of CD2, which leads to hyperphosphorylation and activation of LCK. Also plays a role in the IL2 receptor-linked signaling pathway that controls the T-cell proliferative response. Binding of IL2 to its receptor results in increased activity of LCK. Is expressed at all stages of thymocyte development and is required for the regulation of maturation events that are governed by both pre-TCR and mature alpha beta TCR. Phosphorylates other substrates including RUNX3, PTK2B/PYK2, the microtubule-associated protein MAPT, RHOH or TYROBP. Interacts with FYB2. This is Tyrosine-protein kinase Lck (LCK) from Homo sapiens (Human).